Here is an 85-residue protein sequence, read N- to C-terminus: UPF0386 protein Arad_1912 (85 aa).

This sequence belongs to the UPF0386 family.

The sequence is that of UPF0386 protein Arad_1912 from Rhizobium rhizogenes (strain K84 / ATCC BAA-868) (Agrobacterium radiobacter).